Reading from the N-terminus, the 322-residue chain is PIH1 domain-containing protein 2 (322 aa).

This sequence belongs to the PIH1 family.

This Danio rerio (Zebrafish) protein is PIH1 domain-containing protein 2 (pih1d2).